Here is a 381-residue protein sequence, read N- to C-terminus: Periphilin-1 (381 aa).

Composition is skewed to basic and acidic residues over residues 1 to 28 (MWSEGRYDYDRLPRERVPPRSHPSDGYH), 39 to 65 (PLLDKRPPLLDKRPPLLARPDEGGYSR), and 79 to 121 (RSFS…DGFR). Disordered regions lie at residues 1-65 (MWSE…GYSR) and 79-260 (RSFS…KSDE). The Nuclear localization signal signature appears at 117-123 (RDGFRRK). K123 is covalently cross-linked (Glycyl lysine isopeptide (Lys-Gly) (interchain with G-Cter in SUMO2)). A phosphoserine mark is found at S124, S128, S147, and S154. Over residues 130–156 (YSRDRSPHKRDAPFFRESPVGRKDSPH) the composition is skewed to basic and acidic residues. Positions 157 to 168 (SRSGSSVSSRSY) are enriched in low complexity. The segment covering 175–187 (THSFHQSQHRKSS) has biased composition (basic residues). Residue S181 is modified to Phosphoserine. A Glycyl lysine isopeptide (Lys-Gly) (interchain with G-Cter in SUMO2) cross-link involves residue K194. Residues 195-208 (RQNEAIRGRGKERS) show a composition bias toward basic and acidic residues. At S211 the chain carries Phosphoserine. Residue K213 forms a Glycyl lysine isopeptide (Lys-Gly) (interchain with G-Cter in SUMO2) linkage. Residues S215 and S219 each carry the phosphoserine modification. Residues 217 to 230 (DASPSSSSAVASSK) show a composition bias toward low complexity. Residues 231–260 (ALDKPSRLTEKELAEAESKWANETLEKSDE) are compositionally biased toward basic and acidic residues. A Glycyl lysine isopeptide (Lys-Gly) (interchain with G-Cter in SUMO2) cross-link involves residue K241. The residue at position 249 (K249) is an N6-acetyllysine; alternate. A Glycyl lysine isopeptide (Lys-Gly) (interchain with G-Cter in SUMO2); alternate cross-link involves residue K249. The residue at position 339 (S339) is a Phosphoserine. K342 participates in a covalent cross-link: Glycyl lysine isopeptide (Lys-Gly) (interchain with G-Cter in SUMO2).

Homodimer. Component of the HUSH complex; at least composed of TASOR, PPHLN1 and MPHOSPH8. Interacts with SIN3A and HDAC1. May interact with PPL. In terms of tissue distribution, ubiquitously expressed. Strong expression in the developing somites and limbs, the embryonic nervous system and the adult brain.

The protein resides in the nucleus. Its subcellular location is the cytoplasm. It localises to the chromosome. In terms of biological role, component of the HUSH complex, a multiprotein complex that mediates epigenetic repression. The HUSH complex is recruited to genomic loci rich in H3K9me3 and is probably required to maintain transcriptional silencing by promoting recruitment of SETDB1, a histone methyltransferase that mediates further deposition of H3K9me3. In the HUSH complex, contributes to the maintenance of the complex at chromatin. Acts as a transcriptional corepressor and regulates the cell cycle, probably via the HUSH complex. The HUSH complex is also involved in the silencing of unintegrated retroviral DNA: some part of the retroviral DNA formed immediately after infection remains unintegrated in the host genome and is transcriptionally repressed. May be involved in epithelial differentiation by contributing to epidermal integrity and barrier formation. The sequence is that of Periphilin-1 from Mus musculus (Mouse).